A 323-amino-acid chain; its full sequence is Protoheme IX farnesyltransferase (323 aa).

Transmembrane regions (helical) follow at residues 28-48, 50-70, 101-121, 122-142, 150-170, 178-198, 235-255, and 282-302; these read IIPLLLITTAAAMWIASEGRV, LFTLFITLIGGTLAAAAAQVM, FIFAVILAILSFSLFALFVNL, LSGLLAMSGIVFYMLVYTHLL, IVIGGAAGSIPPLVGWAAVTG, ILFAIIFLWTPPHFWALALMI, FLLVYPLGVSGAVYGGIAIIL, and FSIFYLMLLCTAMVIDSLPLT.

The protein belongs to the UbiA prenyltransferase family. Protoheme IX farnesyltransferase subfamily.

Its subcellular location is the cell inner membrane. The catalysed reaction is heme b + (2E,6E)-farnesyl diphosphate + H2O = Fe(II)-heme o + diphosphate. Its pathway is porphyrin-containing compound metabolism; heme O biosynthesis; heme O from protoheme: step 1/1. Functionally, converts heme B (protoheme IX) to heme O by substitution of the vinyl group on carbon 2 of heme B porphyrin ring with a hydroxyethyl farnesyl side group. The sequence is that of Protoheme IX farnesyltransferase from Rippkaea orientalis (strain PCC 8801 / RF-1) (Cyanothece sp. (strain PCC 8801)).